Reading from the N-terminus, the 879-residue chain is Metabotropic glutamate receptor 3 (879 aa).

A signal peptide spans 1-24 (MKMLTRLQVLTLALFSKGFLLSLG). The Extracellular portion of the chain corresponds to 25–577 (DHNFLRREIK…DYIRWEDAWA (553 aa)). Cys57 and Cys99 are disulfide-bonded. Residues Ser151 and 172 to 174 (AST) contribute to the L-glutamate site. A glycan (N-linked (GlcNAc...) asparagine) is linked at Asn209. Tyr222 serves as a coordination point for L-glutamate. 7 disulfide bridges follow: Cys240/Cys527, Cys361/Cys373, Cys412/Cys419, Cys509/Cys528, Cys513/Cys531, Cys534/Cys546, and Cys549/Cys562. A glycan (N-linked (GlcNAc...) asparagine) is linked at Asn292. Asp301 is an L-glutamate binding site. Lys389 is an L-glutamate binding site. Asn414 and Asn439 each carry an N-linked (GlcNAc...) asparagine glycan. The helical transmembrane segment at 578 to 598 (IGPVTIACLGFMCTCMVITVF) threads the bilayer. Topologically, residues 599–613 (IKHNNTPLVKASGRE) are cytoplasmic. A helical membrane pass occupies residues 614–634 (LCYILLFGVGLSYCMTFFFIA). Residues 635–688 (KPSPVICALRRLGLGSSFAICYSALLTKTNCIARIFDGVKNGAQRPKFISPSSQ) lie on the Extracellular side of the membrane. Residues 689-709 (VFICLGLILVQIVMVSVWLIL) form a helical membrane-spanning segment. Topologically, residues 710 to 735 (EAPGTRRYTLAEKRETVILKCNVKDS) are cytoplasmic. Residues 736–756 (SMLISLTYDVILVILCTVYAF) traverse the membrane as a helical segment. Residues 757-769 (KTRKCPENFNEAK) lie on the Extracellular side of the membrane. Residues 770–790 (FIGFTMYTTCIIWLAFLPIFY) form a helical membrane-spanning segment. At 791–807 (VTSSDYRVQTTTMCISV) the chain is on the cytoplasmic side. Residues 808–828 (SLSGFVVLGCLFAPKVHIILF) form a helical membrane-spanning segment. The Extracellular portion of the chain corresponds to 829–879 (QPQKNVVTHRLHLNRFSVSGTGTTYSQSSASMYVPTVCNGREVLDSTTSSL).

Belongs to the G-protein coupled receptor 3 family. Interacts with TAMALIN.

The protein localises to the cell membrane. Its function is as follows. G-protein coupled receptor for glutamate. Ligand binding causes a conformation change that triggers signaling via guanine nucleotide-binding proteins (G proteins) and modulates the activity of down-stream effectors. Signaling inhibits adenylate cyclase activity. This is Metabotropic glutamate receptor 3 (GRM3) from Macaca fascicularis (Crab-eating macaque).